A 2893-amino-acid chain; its full sequence is Genome polyprotein (2893 aa).

The tract at residues 206–226 is disordered; sequence VQAKPEMDNPNPGPDGEGEVE. The SF3 helicase domain maps to 1446–1612; sequence SKLKTDLMEM…EEKKRGCKHC (167 aa). 1472 to 1479 serves as a coordination point for ATP; the sequence is GASGIGKS. The region spanning 2119 to 2345 is the Peptidase C3 domain; sequence GSTQQVDAAV…VAEPLVHEMF (227 aa). Residues H2170, N2227, and C2307 each act as for 3C-like protease activity in the active site. Residues 2633-2763 enclose the RdRp catalytic domain; it reads THIVTGDYKN…NVSDNMIDKF (131 aa).

In terms of processing, specific enzymatic cleavages in vivo by the viral 3C-like protease yield three mature proteins. 3C-like protease is cleaved autocatalytically.

The protein resides in the virion. It catalyses the reaction RNA(n) + a ribonucleoside 5'-triphosphate = RNA(n+1) + diphosphate. The enzyme catalyses ATP + H2O = ADP + phosphate + H(+). Its activity is regulated as follows. Inhibited by Rupintrivir. Capsid protein that assembles with the capsid proteins VP1 and VP3 to form a pseudo-T3 icosahedral capsid of about 40 nm. Functionally, capsid protein that assembles with the capsid proteins VP1 and VP2 to form a pseudo T3 icosahedral capsid of about 40 nm. Its function is as follows. Capsid protein that assembles with the capsid proteins VP2 and VP3 to form a pseudo T3 icosahedral capsid of about 40 nm. In terms of biological role, displays RNA helix destabilizing and strand annealing acceleration activity. This activity is necessary at several points during genome replication, for example to separate duplexes that form after genome replication. Cysteine protease that generates mature viral proteins from the precursor polyprotein. Functionally, replicates genomic and antigenomic RNA. This Deformed wing virus (DWV) protein is Genome polyprotein.